The sequence spans 1500 residues: ABC transporter G family member 42 (1500 aa).

A disordered region spans residues 26-56 (VDEAFMPQNSGGGGGSRGRRRSGRGGTADDD). The ABC transporter 1 domain maps to 182 to 455 (LGLVGVRPGR…FESCGFRCPE (274 aa)). Residue 215-222 (GPPSSGKT) participates in ATP binding. The 214-residue stretch at 533 to 746 (ELLKASFAKE…GYNALAVNEF (214 aa)) folds into the ABC transmembrane type-2 1 domain. 7 helical membrane-spanning segments follow: residues 551 to 571 (FVYIFKTIQLIIVALVASTVF), 584 to 604 (GFVYIGALLFSLIVNMFNGFA), 639 to 659 (IPFSIIESIVWVIVTYYTIGF), 670 to 690 (LLLVFLIQQMAGGLFRATAGL), 695 to 715 (IIAQTGGALALLIFFVLGGFL), 724 to 744 (WWIWGYWVSPLMYGYNALAVN), and 783 to 803 (FWIGAAGLLGFTMFFNVLFTL). The span at 822–834 (TAKEAEGNGDARH) shows a compositional bias: basic and acidic residues. The disordered stretch occupies residues 822 to 850 (TAKEAEGNGDARHTVRNGSTKSNGGNHKE). Residues 837-846 (RNGSTKSNGG) are compositionally biased toward polar residues. In terms of domain architecture, ABC transporter 2 spans 894 to 1151 (MSFDDVNYYV…KMIEYFEAIP (258 aa)). An ATP-binding site is contributed by 939-946 (GVSGAGKT). An ABC transmembrane type-2 2 domain is found at 1224–1438 (GQFRACLWKQ…TVYGLIVTQY (215 aa)). Helical transmembrane passes span 1245–1265 (LVRFSFTLFTALLLGTIFWKI), 1277–1297 (MVIGAMYTAVMFIGINNCATV), 1331–1351 (IPYVFVQTAYYTLIVYAMMSF), 1358–1378 (FFWFFFVSYFSFLYFTYYGMM), 1388–1408 (VAAIFAAAFYSLFNLFSGFFI), 1416–1436 (WWIWYYWLCPLAWTVYGLIVT), and 1472–1492 (VVAPVLVLFAVFFAFMYAICI).

Belongs to the ABC transporter superfamily. ABCG family. PDR (TC 3.A.1.205) subfamily.

It localises to the membrane. In terms of biological role, may be a general defense protein. This Oryza sativa subsp. japonica (Rice) protein is ABC transporter G family member 42.